We begin with the raw amino-acid sequence, 408 residues long: Ubiquitin-associated domain-containing protein 1 (408 aa).

Positions 14-98 constitute a Ubiquitin-like domain; that stretch reads LRLQVCTMEG…LLLIKKRAPP (85 aa). The interval 100-119 is disordered; the sequence is LPKMADVSAEEKRKQEQKAP. A compositionally biased stretch (basic and acidic residues) spans 108-119; sequence AEEKRKQEQKAP. The UBA 1 domain occupies 185–231; the sequence is DEDEEDRVDEIALRQLTEMGFPESRAVKALRLNHMSVTQAMEWLIEH. Residues 235–275 form a disordered region; it reads PAVDAPLPGQTPSEAAAEAGASSAEATAGPSSEAGGEEAKD. The segment covering 245 to 268 has biased composition (low complexity); that stretch reads TPSEAAAEAGASSAEATAGPSSEA. The UBA 2 domain occupies 291–331; that stretch reads RPDPRAVIALMEMGFDEKEVVDALRVNNNQQNAACEWLLGD. Residues 356-395 enclose the STI1 domain; sequence NPVVQLGLTNPKTLLAFEDMLENPLNSTQWMNDPETGPVM.

In terms of assembly, component of the KPC complex.

Its subcellular location is the cytoplasm. Its pathway is protein modification; protein ubiquitination. Its function is as follows. Non-catalytic component of the KPC complex, a E3 ubiquitin-protein ligase complex that mediates polyubiquitination of target proteins, such as CDKN1B and NFKB1. Within the KPC complex, UBAC1 acts as an adapter that promotes the transfer of target proteins that have been polyubiquitinated by RNF123/KPC1 to the 26S proteasome. The polypeptide is Ubiquitin-associated domain-containing protein 1 (UBAC1) (Gallus gallus (Chicken)).